The following is a 412-amino-acid chain: uncharacterized protein (412 aa).

His49 lines the Zn(2+) pocket. The active-site Proton acceptor is the Glu52. Positions 53 and 129 each coordinate Zn(2+).

The protein belongs to the peptidase M16 family. Requires Zn(2+) as cofactor.

This is an uncharacterized protein from Rickettsia bellii (strain RML369-C).